The primary structure comprises 135 residues: uncharacterized protein (135 aa).

3 helical membrane-spanning segments follow: residues A13–L35, V82–I101, and I108–L130.

It localises to the cell membrane. This is an uncharacterized protein from Archaeoglobus fulgidus (strain ATCC 49558 / DSM 4304 / JCM 9628 / NBRC 100126 / VC-16).